The sequence spans 475 residues: tRNA modification GTPase MnmE (475 aa).

Residues Arg-24, Glu-81, and Lys-124 each contribute to the (6S)-5-formyl-5,6,7,8-tetrahydrofolate site. A TrmE-type G domain is found at 220–397; that stretch reads GLSVVLAGQP…LRKELLRLVG (178 aa). A K(+)-binding site is contributed by Asn-230. Residues 230-235, 249-255, 274-277, and 378-380 each bind GTP; these read NVGKSS, TPIAGTT, DTAG, and SAR. Ser-234 contributes to the Mg(2+) binding site. K(+) contacts are provided by Thr-249, Ile-251, and Thr-254. Thr-255 contacts Mg(2+). (6S)-5-formyl-5,6,7,8-tetrahydrofolate is bound at residue Lys-475.

This sequence belongs to the TRAFAC class TrmE-Era-EngA-EngB-Septin-like GTPase superfamily. TrmE GTPase family. As to quaternary structure, homodimer. Heterotetramer of two MnmE and two MnmG subunits. K(+) is required as a cofactor.

The protein resides in the cytoplasm. In terms of biological role, exhibits a very high intrinsic GTPase hydrolysis rate. Involved in the addition of a carboxymethylaminomethyl (cmnm) group at the wobble position (U34) of certain tRNAs, forming tRNA-cmnm(5)s(2)U34. This Cupriavidus pinatubonensis (strain JMP 134 / LMG 1197) (Cupriavidus necator (strain JMP 134)) protein is tRNA modification GTPase MnmE.